A 435-amino-acid chain; its full sequence is Gamma-glutamyl phosphate reductase (435 aa).

This sequence belongs to the gamma-glutamyl phosphate reductase family.

It localises to the cytoplasm. The catalysed reaction is L-glutamate 5-semialdehyde + phosphate + NADP(+) = L-glutamyl 5-phosphate + NADPH + H(+). The protein operates within amino-acid biosynthesis; L-proline biosynthesis; L-glutamate 5-semialdehyde from L-glutamate: step 2/2. Catalyzes the NADPH-dependent reduction of L-glutamate 5-phosphate into L-glutamate 5-semialdehyde and phosphate. The product spontaneously undergoes cyclization to form 1-pyrroline-5-carboxylate. The chain is Gamma-glutamyl phosphate reductase from Parasynechococcus marenigrum (strain WH8102).